The following is a 298-amino-acid chain: Homoserine kinase (298 aa).

Residue 83–93 (PISRGLGSSSS) coordinates ATP.

The protein belongs to the GHMP kinase family. Homoserine kinase subfamily.

Its subcellular location is the cytoplasm. It carries out the reaction L-homoserine + ATP = O-phospho-L-homoserine + ADP + H(+). It participates in amino-acid biosynthesis; L-threonine biosynthesis; L-threonine from L-aspartate: step 4/5. Its function is as follows. Catalyzes the ATP-dependent phosphorylation of L-homoserine to L-homoserine phosphate. The protein is Homoserine kinase of Clostridium botulinum (strain Alaska E43 / Type E3).